A 259-amino-acid polypeptide reads, in one-letter code: Polycomb group RING finger protein 1 (259 aa).

Residue Ala2 is modified to N-acetylalanine. At Ser3 the chain carries Phosphoserine. Lys24 participates in a covalent cross-link: Glycyl lysine isopeptide (Lys-Gly) (interchain with G-Cter in SUMO2). An RING-type zinc finger spans residues 47–86; that stretch reads CCLCAGYFVDATTITECLHTFCKSCIVKYLQTSKYCPMCN. The segment at 86–247 is required for repressor activity; sequence NIKIHETQPL…LSRWFGKPSP (162 aa). Residue Lys88 forms a Glycyl lysine isopeptide (Lys-Gly) (interchain with G-Cter in SUMO2) linkage. The tract at residues 150 to 255 is required for the interaction with the KDM2B-SKP1 heterodimeric complex; that stretch reads LPFSSFDHSK…SPLLLQYSVK (106 aa). The tract at residues 167–255 is RING-finger and WD40-associated ubiquitin-like domain (RAWUL); sufficient for interaction with BCOR and BCORL1; sequence EQLNLCLERL…SPLLLQYSVK (89 aa).

As to quaternary structure, interacts with BCORL1, forming heterodimers. The PCGF1-BCORL1 heterodimeric complex interacts with the KDM2B-SKP1 heterodimeric complex to form a homotetrameric polycomb repression complex 1 (PRC1.1). Component of the repressive BCOR complex containing a Polycomb group subcomplex at least composed of RYBP, RING1 and RNF2/RING2. Specifically interacts with BCOR, RING1 and RNF2/RING2. Component of a PRC1-like complex. Interacts with CBX6, CBX7 and CBX8. Interacts with DPPA4, NANOG, POU5F1 and RYBP. As to expression, ubiquitous.

It is found in the nucleus. Component of the Polycomb group (PcG) multiprotein BCOR complex, a complex required to maintain the transcriptionally repressive state of some genes, such as BCL6 and the cyclin-dependent kinase inhibitor, CDKN1A. Transcriptional repressor that may be targeted to the DNA by BCL6; this transcription repressor activity may be related to PKC signaling pathway. Represses CDKN1A expression by binding to its promoter, and this repression is dependent on the retinoic acid response element (RARE element). Promotes cell cycle progression and enhances cell proliferation as well. May have a positive role in tumor cell growth by down-regulating CDKN1A. Component of a Polycomb group (PcG) multiprotein PRC1-like complex, a complex class required to maintain the transcriptionally repressive state of many genes, including Hox genes, throughout development. PcG PRC1 complex acts via chromatin remodeling and modification of histones; it mediates monoubiquitination of histone H2A 'Lys-119', rendering chromatin heritably changed in its expressibility. Within the PRC1-like complex, regulates RNF2 ubiquitin ligase activity. Regulates the expression of DPPA4 and NANOG in the NT2 embryonic carcinoma cells. The sequence is that of Polycomb group RING finger protein 1 (PCGF1) from Homo sapiens (Human).